Reading from the N-terminus, the 815-residue chain is Ent-sandaracopimara-8(14),15-diene synthase, chloroplastic (815 aa).

Residues 1–38 (MLPSSICSMGQIPRTSPHYYGMLPKQMSKGHPPMVTRA) constitute a chloroplast transit peptide. 5 residues coordinate Mg(2+): D550, D554, N696, T700, and E704. A DDXXD motif motif is present at residues 550-554 (DDFFD).

The protein belongs to the terpene synthase family. Requires Mg(2+) as cofactor.

The protein localises to the plastid. The protein resides in the chloroplast. It catalyses the reaction ent-copalyl diphosphate = ent-sandaracopimara-8(14),15-diene + diphosphate. It carries out the reaction 9alpha-copalyl diphosphate = (12E)-9alpha-labda-8(17),12,14-triene + diphosphate. Involved in the biosynthesis of oryzalexin A-F phytoalexins. Catalyzes the conversion of ent-copalyl diphosphate to the phytoalexin precursor ent-sandaracopimaradiene. This Oryza sativa subsp. japonica (Rice) protein is Ent-sandaracopimara-8(14),15-diene synthase, chloroplastic.